A 221-amino-acid chain; its full sequence is Ribosomal RNA large subunit methyltransferase E (221 aa).

S-adenosyl-L-methionine-binding residues include G72, W74, D91, D107, and D131. The active-site Proton acceptor is the K171.

Belongs to the class I-like SAM-binding methyltransferase superfamily. RNA methyltransferase RlmE family.

It localises to the cytoplasm. The catalysed reaction is uridine(2552) in 23S rRNA + S-adenosyl-L-methionine = 2'-O-methyluridine(2552) in 23S rRNA + S-adenosyl-L-homocysteine + H(+). Functionally, specifically methylates the uridine in position 2552 of 23S rRNA at the 2'-O position of the ribose in the fully assembled 50S ribosomal subunit. The protein is Ribosomal RNA large subunit methyltransferase E of Zymomonas mobilis subsp. mobilis (strain ATCC 31821 / ZM4 / CP4).